A 306-amino-acid polypeptide reads, in one-letter code: Large ribosomal subunit protein mL45 (306 aa).

The segment at 287–306 is disordered; that stretch reads LKPEEEYEEAQGEAQKPQLA.

Belongs to the mitochondrion-specific ribosomal protein mL45 family. Component of the mitochondrial large ribosomal subunit (mt-LSU). Mature mammalian 55S mitochondrial ribosomes consist of a small (28S) and a large (39S) subunit. The 28S small subunit contains a 12S ribosomal RNA (12S mt-rRNA) and 30 different proteins. The 39S large subunit contains a 16S rRNA (16S mt-rRNA), a copy of mitochondrial valine transfer RNA (mt-tRNA(Val)), which plays an integral structural role, and 52 different proteins.

It is found in the mitochondrion. Functionally, component of the mitochondrial large ribosomal subunit (mt-LSU). Within the mitochondrial ribosomes, required to direct the nascent polypeptide toward the tunnel exit and position the exit at a distance from the membrane surface. This is Large ribosomal subunit protein mL45 from Homo sapiens (Human).